The primary structure comprises 201 residues: Small ribosomal subunit protein uS4c (201 aa).

The disordered stretch occupies residues 15-43; sequence LGALPGLTSKRPRSGSDLRNQSRSGKRSQ. One can recognise an S4 RNA-binding domain in the interval 89–150; sequence MRLDNILFRL…KERSRALIQN (62 aa).

It belongs to the universal ribosomal protein uS4 family. As to quaternary structure, part of the 30S ribosomal subunit. Contacts protein S5. The interaction surface between S4 and S5 is involved in control of translational fidelity.

The protein localises to the plastid. The protein resides in the chloroplast. One of the primary rRNA binding proteins, it binds directly to 16S rRNA where it nucleates assembly of the body of the 30S subunit. In terms of biological role, with S5 and S12 plays an important role in translational accuracy. This is Small ribosomal subunit protein uS4c (rps4) from Amborella trichopoda.